The primary structure comprises 198 residues: Vacuolar iron transporter homolog 4 (198 aa).

Residues 1-32 are Cytoplasmic-facing; sequence MESNNNNLNLDMEKDQETTFDYSKRAQWLRAA. A helical transmembrane segment spans residues 33–53; it reads VLGANDGLVSTASLMMGIGAV. Residues 54–60 lie on the Vacuolar side of the membrane; sequence KQDVRIM. The chain crosses the membrane as a helical span at residues 61–81; sequence LLTGFAGLVAGACSMAIGEFI. Topologically, residues 82 to 114 are cytoplasmic; it reads SVYSQYDIEVAQMKRESGGETKKEKLPSPTQAA. Residues 115 to 135 traverse the membrane as a helical segment; the sequence is IASALAFTLGAIVPLLAAAFV. The Vacuolar portion of the chain corresponds to 136–141; that stretch reads KEYKVR. A helical transmembrane segment spans residues 142–162; it reads IGVIVAAVTLALVMFGWLGAV. The Cytoplasmic portion of the chain corresponds to 163-174; it reads LGKAPVVKSLVR. A helical transmembrane segment spans residues 175-195; sequence VLIGGWLAMAITFGFTKLVGS. At 196-198 the chain is on the vacuolar side; the sequence is HGL.

It belongs to the CCC1 family.

The protein localises to the vacuole membrane. It catalyses the reaction Fe(2+)(in) = Fe(2+)(out). Its function is as follows. Probable vacuolar iron transporter that may be involved in the regulation of iron distribution throughout the plant. The chain is Vacuolar iron transporter homolog 4 from Arabidopsis thaliana (Mouse-ear cress).